The sequence spans 274 residues: Bis(5'-nucleosyl)-tetraphosphatase, symmetrical (274 aa).

The protein belongs to the Ap4A hydrolase family.

The enzyme catalyses P(1),P(4)-bis(5'-adenosyl) tetraphosphate + H2O = 2 ADP + 2 H(+). Hydrolyzes diadenosine 5',5'''-P1,P4-tetraphosphate to yield ADP. The sequence is that of Bis(5'-nucleosyl)-tetraphosphatase, symmetrical from Shewanella baltica (strain OS223).